The primary structure comprises 380 residues: Actin-like protein (380 aa).

This sequence belongs to the actin family. ARP1 subfamily.

The protein resides in the cytoplasm. Its subcellular location is the cytoskeleton. Involved in nuclear migration. May function as a component of the dynactin complex which activates force generation by cytoplasmic dynein. The chain is Actin-like protein (ro-4) from Neurospora crassa (strain ATCC 24698 / 74-OR23-1A / CBS 708.71 / DSM 1257 / FGSC 987).